Reading from the N-terminus, the 490-residue chain is Protein nucleotidyltransferase YdiU (490 aa).

Residues glycine 92, glycine 94, arginine 95, lysine 114, aspartate 126, glycine 127, arginine 177, and arginine 184 each coordinate ATP. Residue aspartate 256 is the Proton acceptor of the active site. Residues asparagine 257 and aspartate 266 each contribute to the Mg(2+) site. Aspartate 266 provides a ligand contact to ATP.

The protein belongs to the SELO family. Requires Mg(2+) as cofactor. It depends on Mn(2+) as a cofactor.

The catalysed reaction is L-seryl-[protein] + ATP = 3-O-(5'-adenylyl)-L-seryl-[protein] + diphosphate. It catalyses the reaction L-threonyl-[protein] + ATP = 3-O-(5'-adenylyl)-L-threonyl-[protein] + diphosphate. The enzyme catalyses L-tyrosyl-[protein] + ATP = O-(5'-adenylyl)-L-tyrosyl-[protein] + diphosphate. It carries out the reaction L-histidyl-[protein] + UTP = N(tele)-(5'-uridylyl)-L-histidyl-[protein] + diphosphate. The catalysed reaction is L-seryl-[protein] + UTP = O-(5'-uridylyl)-L-seryl-[protein] + diphosphate. It catalyses the reaction L-tyrosyl-[protein] + UTP = O-(5'-uridylyl)-L-tyrosyl-[protein] + diphosphate. In terms of biological role, nucleotidyltransferase involved in the post-translational modification of proteins. It can catalyze the addition of adenosine monophosphate (AMP) or uridine monophosphate (UMP) to a protein, resulting in modifications known as AMPylation and UMPylation. The protein is Protein nucleotidyltransferase YdiU of Bordetella avium (strain 197N).